The chain runs to 1023 residues: Transmembrane protein 132A (1023 aa).

A signal peptide spans Met-1 to Asp-35. Residues Cys-36–Ala-852 lie on the Extracellular side of the membrane. Positions Ala-212–Gln-246 are disordered. A glycan (N-linked (GlcNAc...) asparagine) is linked at Asn-280. Disordered regions lie at residues Trp-512–Glu-533 and Leu-766–Ala-839. Positions Pro-515–Glu-527 are enriched in low complexity. Ser-529 carries the post-translational modification Phosphoserine; by FAM20C. Positions Ile-611 to Pro-916 are binds to HSPA5/GRP78. A confers cellular localization similar to full-length form region spans residues Leu-671–Ser-1023. Low complexity predominate over residues Ser-778–Thr-790. Positions Gly-809–Thr-823 are enriched in basic and acidic residues. The segment covering Glu-824–Met-836 has biased composition (acidic residues). The helical transmembrane segment at Leu-853–Leu-873 threads the bilayer. The Cytoplasmic portion of the chain corresponds to Arg-874–Ser-1023. The tract at residues Leu-905–Lys-961 is disordered.

This sequence belongs to the TMEM132 family. In terms of assembly, interacts with HSPA5/GRP78.

It is found in the golgi apparatus membrane. It localises to the endoplasmic reticulum membrane. In terms of biological role, may play a role in embryonic and postnatal development of the brain. Increased resistance to cell death induced by serum starvation in cultured cells. Regulates cAMP-induced GFAP gene expression via STAT3 phosphorylation. This chain is Transmembrane protein 132A (TMEM132A), found in Homo sapiens (Human).